We begin with the raw amino-acid sequence, 301 residues long: Vomeronasal type-1 receptor 4 (301 aa).

The Extracellular segment spans residues 1–5; that stretch reads MASRY. Residues 6–26 form a helical membrane-spanning segment; the sequence is VAVGMILSQTVVGVLGSFSVL. Topologically, residues 27–48 are cytoplasmic; it reads LHYLSFYCTGCRLRSTDLIVKH. Residues 49 to 69 traverse the membrane as a helical segment; it reads LIVANFLALRCKGVPQTMAAF. At 70-88 the chain is on the extracellular side; it reads GVRYFLNALGCKLVFYLHR. The chain crosses the membrane as a helical span at residues 89–109; it reads VGRGVSIGTTCLLSVFQVITV. Over 110–126 the chain is Cytoplasmic; that stretch reads SSRKSRWAKLKEKAPKH. The helical transmembrane segment at 127–147 threads the bilayer; that stretch reads VGFSVLLCWIVCMLVNIIFPM. Topologically, residues 148–185 are extracellular; the sequence is YVTGKWNYTNITVNEDLGYCSGGGNNKIAQTLRAMLLS. Asn-154 and Asn-157 each carry an N-linked (GlcNAc...) asparagine glycan. The helical transmembrane segment at 186–206 threads the bilayer; the sequence is FPDVLCLGLMLWVSSSMVCIL. Topologically, residues 207 to 234 are cytoplasmic; it reads HRHKQRVQHIDRSNLSPRASPENRATQS. Residues 235–255 form a helical membrane-spanning segment; sequence ILILVSTFVSSYTLSCLFQVC. Topologically, residues 256–264 are extracellular; sequence MALLDNPNS. The chain crosses the membrane as a helical span at residues 265–285; that stretch reads LLVNTSALMSVCFPTLSPFVL. At 286-301 the chain is on the cytoplasmic side; the sequence is MSCDPSVYRFCFAWKR.

Belongs to the G-protein coupled receptor 1 family.

The protein resides in the cell membrane. Functionally, putative pheromone receptor. This is Vomeronasal type-1 receptor 4 (VN1R4) from Homo sapiens (Human).